We begin with the raw amino-acid sequence, 102 residues long: Small ribosomal subunit protein uS10 (102 aa).

This sequence belongs to the universal ribosomal protein uS10 family. Part of the 30S ribosomal subunit.

Its function is as follows. Involved in the binding of tRNA to the ribosomes. This Methanosphaera stadtmanae (strain ATCC 43021 / DSM 3091 / JCM 11832 / MCB-3) protein is Small ribosomal subunit protein uS10.